Reading from the N-terminus, the 287-residue chain is 4-diphosphocytidyl-2-C-methyl-D-erythritol kinase (287 aa).

Lys-10 is an active-site residue. 94-104 lines the ATP pocket; sequence PVAAGLGGGSA. Asp-136 is a catalytic residue.

The protein belongs to the GHMP kinase family. IspE subfamily.

It catalyses the reaction 4-CDP-2-C-methyl-D-erythritol + ATP = 4-CDP-2-C-methyl-D-erythritol 2-phosphate + ADP + H(+). Its pathway is isoprenoid biosynthesis; isopentenyl diphosphate biosynthesis via DXP pathway; isopentenyl diphosphate from 1-deoxy-D-xylulose 5-phosphate: step 3/6. Its function is as follows. Catalyzes the phosphorylation of the position 2 hydroxy group of 4-diphosphocytidyl-2C-methyl-D-erythritol. The chain is 4-diphosphocytidyl-2-C-methyl-D-erythritol kinase from Pelotomaculum thermopropionicum (strain DSM 13744 / JCM 10971 / SI).